A 604-amino-acid chain; its full sequence is Integrin alpha-IIb (604 aa).

The FG-GAP repeat unit spans residues 1 to 61 (QVLDSPFPTG…ASVQLLVQDS (61 aa)). Over 1 to 558 (QVLDSPFPTG…TQLLRALEER (558 aa)) the chain is Extracellular. Ca(2+) is bound by residues aspartate 22, aspartate 24, asparagine 26, tyrosine 28, and aspartate 30. 2 disulfide bridges follow: cysteine 69–cysteine 80 and cysteine 86–cysteine 141. Asparagine 166 carries N-linked (GlcNAc...) asparagine glycosylation. Cystine bridges form between cysteine 198–cysteine 204, cysteine 270–cysteine 283, cysteine 422–cysteine 486, and cysteine 476–cysteine 481. Residue asparagine 276 is glycosylated (N-linked (GlcNAc...) asparagine). The N-linked (GlcNAc...) asparagine glycan is linked to asparagine 527. A helical transmembrane segment spans residues 559-584 (AIPIWWVLVGVLGGLLLLTILVLAMW). Over 585–604 (KVGFFKRNRPPLEEDDEEGE) the chain is Cytoplasmic. A GFFKR motif motif is present at residues 587–591 (GFFKR).

Belongs to the integrin alpha chain family. In terms of assembly, heterodimer of an alpha and a beta subunit. The alpha subunit is composed of a heavy and a light chain linked by a disulfide bond. Alpha-IIb associates with beta-3. Directly interacts with RNF181. Interacts (via C-terminus cytoplasmic tail region) with CIB1; the interaction is direct and calcium-dependent. Interacts (via C-terminus cytoplasmic tail region) with CIB2, CIB3 and CIB4; the interactions are stabilized/increased in a calcium and magnesium-dependent manner. ITGA2B:ITGB3 interacts with PPIA/CYPA; the interaction is ROS and PPIase activity-dependent and is increased in the presence of thrombin. ITGA2B:ITGB3 interacts with SELP (via C-type lectin domain); the interaction mediates cell-cell interaction and adhesion.

It is found in the membrane. Functionally, integrin alpha-IIb/beta-3 is a receptor for fibronectin, fibrinogen, plasminogen, prothrombin, thrombospondin and vitronectin. It recognizes the sequence R-G-D in a wide array of ligands. It recognizes the sequence H-H-L-G-G-G-A-K-Q-A-G-D-V in fibrinogen gamma chain. Following activation integrin alpha-IIb/beta-3 brings about platelet/platelet interaction through binding of soluble fibrinogen. This step leads to rapid platelet aggregation which physically plugs ruptured endothelial cell surface. This is Integrin alpha-IIb (ITGA2B) from Papio cynocephalus (Yellow baboon).